A 33-amino-acid chain; its full sequence is Beta/kappa-theraphotoxin-Hlv1a (33 aa).

3 disulfides stabilise this stretch: Cys-2/Cys-17, Cys-9/Cys-22, and Cys-16/Cys-29. Ile-33 carries the post-translational modification Isoleucine amide.

Belongs to the neurotoxin 10 (Hwtx-1) family. 11 (haplotoxin-2) subfamily. In terms of tissue distribution, expressed by the venom gland.

The protein resides in the secreted. In terms of biological role, spider venom neurotoxin that blocks voltage-gated sodium channel Nav1.3/SCN3A in human (IC(50)=80 nM) and rat (IC(50)=160 nM). Partially inhibits human Kv11.1/KCNH2/ERG (25% at 175 uM). The sequence is that of Beta/kappa-theraphotoxin-Hlv1a from Cyriopagopus lividus (Cobalt blue tarantula).